The chain runs to 327 residues: Trypsin-like protease try-5 (327 aa).

The signal sequence occupies residues 1–21 (MRPRIIVFLFQVLVVIKGTKL). Positions 43–327 (AAGNTGNPTH…KFIVNFINQA (285 aa)) constitute a Peptidase S1 domain. Cys-73 and Cys-89 are oxidised to a cystine. Active-site charge relay system residues include His-88 and Asp-173. N-linked (GlcNAc...) asparagine glycosylation is present at Asn-207. 2 disulfide bridges follow: Cys-242-Cys-256 and Cys-266-Cys-296. The active-site Charge relay system is the Ser-270.

This sequence belongs to the peptidase S1 family. As to expression, specifically expressed in the male gonad including the seminal vesicle, the valve region and the vas deferens.

Its subcellular location is the secreted. The protein localises to the cytoplasmic vesicle. The protein resides in the secretory vesicle lumen. With respect to regulation, in the male gonad, probably maintained inactive by swm-1. Serine protease which, in males, acts as a promoting signal during mating to activate sperm. This is Trypsin-like protease try-5 from Caenorhabditis elegans.